The primary structure comprises 245 residues: tRNA pseudouridine synthase A (245 aa).

The active-site Nucleophile is the Asp-52. Tyr-110 serves as a coordination point for substrate.

Belongs to the tRNA pseudouridine synthase TruA family. In terms of assembly, homodimer.

It catalyses the reaction uridine(38/39/40) in tRNA = pseudouridine(38/39/40) in tRNA. Formation of pseudouridine at positions 38, 39 and 40 in the anticodon stem and loop of transfer RNAs. This Pseudothermotoga lettingae (strain ATCC BAA-301 / DSM 14385 / NBRC 107922 / TMO) (Thermotoga lettingae) protein is tRNA pseudouridine synthase A.